The primary structure comprises 63 residues: Large ribosomal subunit protein bL35 (63 aa).

Basic residues predominate over residues 1–15 (MPKIKTHRGAAKRFK). The segment at 1 to 26 (MPKIKTHRGAAKRFKQTAGGKWKGSH) is disordered.

The protein belongs to the bacterial ribosomal protein bL35 family.

This chain is Large ribosomal subunit protein bL35, found in Pelotomaculum thermopropionicum (strain DSM 13744 / JCM 10971 / SI).